Reading from the N-terminus, the 73-residue chain is Translation initiation factor IF-1 2 (73 aa).

In terms of domain architecture, S1-like spans 1–72; sequence MAKEELVEFG…TKGRINYRHK (72 aa).

This sequence belongs to the IF-1 family. In terms of assembly, component of the 30S ribosomal translation pre-initiation complex which assembles on the 30S ribosome in the order IF-2 and IF-3, IF-1 and N-formylmethionyl-tRNA(fMet); mRNA recruitment can occur at any time during PIC assembly.

It localises to the cytoplasm. Its function is as follows. One of the essential components for the initiation of protein synthesis. Stabilizes the binding of IF-2 and IF-3 on the 30S subunit to which N-formylmethionyl-tRNA(fMet) subsequently binds. Helps modulate mRNA selection, yielding the 30S pre-initiation complex (PIC). Upon addition of the 50S ribosomal subunit IF-1, IF-2 and IF-3 are released leaving the mature 70S translation initiation complex. The polypeptide is Translation initiation factor IF-1 2 (Cupriavidus pinatubonensis (strain JMP 134 / LMG 1197) (Cupriavidus necator (strain JMP 134))).